The primary structure comprises 129 residues: Fluoride-specific ion channel FluC 2 (129 aa).

Helical transmembrane passes span 4 to 24 (LDVMWVCLGGGVGSLGRWWIG), 39 to 59 (TFLINISGAFVIGYLSVLFGV), 65 to 85 (YGTMLNAGVLTGILGGYTTFS), and 104 to 124 (VFYLVASVLSGLFAAWLGAML). 2 residues coordinate Na(+): Gly-79 and Thr-82.

This sequence belongs to the fluoride channel Fluc/FEX (TC 1.A.43) family.

The protein localises to the cell inner membrane. It catalyses the reaction fluoride(in) = fluoride(out). Na(+) is not transported, but it plays an essential structural role and its presence is essential for fluoride channel function. In terms of biological role, fluoride-specific ion channel. Important for reducing fluoride concentration in the cell, thus reducing its toxicity. This Brucella abortus biovar 1 (strain 9-941) protein is Fluoride-specific ion channel FluC 2.